Reading from the N-terminus, the 462-residue chain is Hyaluronidase-1 (462 aa).

Positions 1–52 (MLGLTQHAQKVWRMKPFSPEVSPGSSPATAGHLLRISTLFLTLLELAQVCRG) are cleaved as a signal peptide. Disulfide bonds link Cys-71–Cys-361 and Cys-235–Cys-249. N-linked (GlcNAc...) asparagine glycosylation is found at Asn-98 and Asn-127. Residue Glu-159 is the Proton donor of the active site. N-linked (GlcNAc...) asparagine glycans are attached at residues Asn-244, Asn-265, and Asn-378. Cystine bridges form between Cys-386–Cys-397, Cys-391–Cys-446, and Cys-448–Cys-457. In terms of domain architecture, EGF-like spans 446–457 (CRCYRGWRGKWC).

Belongs to the glycosyl hydrolase 56 family. As to expression, highly expressed in liver, kidney, lung and skin.

Its subcellular location is the secreted. It is found in the lysosome. The enzyme catalyses Random hydrolysis of (1-&gt;4)-linkages between N-acetyl-beta-D-glucosamine and D-glucuronate residues in hyaluronate.. In terms of biological role, may have a role in promoting tumor progression. May block the TGFB1-enhanced cell growth. The chain is Hyaluronidase-1 (Hyal1) from Mus musculus (Mouse).